The sequence spans 311 residues: 4-diphosphocytidyl-2-C-methyl-D-erythritol kinase (311 aa).

The active site involves lysine 9. 95–105 (PLGAGLAGGST) lines the ATP pocket. Residue aspartate 137 is part of the active site.

This sequence belongs to the GHMP kinase family. IspE subfamily.

The catalysed reaction is 4-CDP-2-C-methyl-D-erythritol + ATP = 4-CDP-2-C-methyl-D-erythritol 2-phosphate + ADP + H(+). Its pathway is isoprenoid biosynthesis; isopentenyl diphosphate biosynthesis via DXP pathway; isopentenyl diphosphate from 1-deoxy-D-xylulose 5-phosphate: step 3/6. Its function is as follows. Catalyzes the phosphorylation of the position 2 hydroxy group of 4-diphosphocytidyl-2C-methyl-D-erythritol. In Thermosynechococcus vestitus (strain NIES-2133 / IAM M-273 / BP-1), this protein is 4-diphosphocytidyl-2-C-methyl-D-erythritol kinase.